The sequence spans 443 residues: Delta(6)-fatty-acid desaturase fat-3 (443 aa).

The region spanning 1–71 (MVVDKNASGL…DLLKKHGEHD (71 aa)) is the Cytochrome b5 heme-binding domain. 3 consecutive transmembrane segments (helical) span residues 136–156 (IMAF…ACLL), 296–316 (TIVG…TWPL), and 318–338 (VAYF…VVTF).

The protein belongs to the fatty acid desaturase type 1 family.

The protein resides in the membrane. The enzyme catalyses (9Z,12Z)-octadecadienoyl-CoA + 2 Fe(II)-[cytochrome b5] + O2 + 2 H(+) = (6Z,9Z,12Z)-octadecatrienoyl-CoA + 2 Fe(III)-[cytochrome b5] + 2 H2O. The catalysed reaction is (9Z,12Z,15Z)-octadecatrienoyl-CoA + 2 Fe(II)-[cytochrome b5] + O2 + 2 H(+) = (6Z,9Z,12Z,15Z)-octadecatetraenoyl-CoA + 2 Fe(III)-[cytochrome b5] + 2 H2O. It participates in lipid metabolism; polyunsaturated fatty acid biosynthesis. Functionally, can function as a Delta(6) fatty acid desaturase. Introduces a double bond in the fatty acid chain 6 carbons away from carboxy terminal to biosynthesize polyunsaturated fatty acids (PUFAs) endogenously (PUFAs are essential for membrane structure and many cellular and physiological processes). Acts on a variety of substrates such as linoleoyl-CoA ((9Z,12Z)-octadecadienoyl-CoA, C18:2n-6) and alpha-linolenoyl-CoA ((9Z,12Z,15Z)-octadecatrienoyl-CoA, C18:3n-3) to produce gamma-linolenoyl-CoA ((6Z,9Z,12Z)-octadecatrienoyl-CoA, C18:3n-6) and (6Z,9Z,12Z,15Z)-octadecatetraenoyl-CoA (18:4n-3) respectively. Unlike plants, Caenorhabditis elegans desaturases seem to use fatty acyl-CoAs as substrates. Plays a role in synaptic vesicle recycling by regulating synaptojanin unc-26 localization at synapses. The protein is Delta(6)-fatty-acid desaturase fat-3 (fat-3) of Caenorhabditis elegans.